A 299-amino-acid polypeptide reads, in one-letter code: MTENEMTSNDSTEPTPTTETAASSPDPSGDPLIEQSIDVEGTDSTAAETGKPVIESSDLNVFYGETQALQSIDLAIPEKQVTAMIGPSGCGKSTFLRCINRMNDLIDAARVEGDLHFEGKNVYDADVDPVALRRRIGMVFQHPNPFPKSIYDNVAYGLRIQDQTENIDEKVETALKRAALWDEVKDQLDKSALDLSGGQQQRLCIARAIAVDPDVILMDEPASALDPIATSKIEDLIEELAEEFTVVIVTHNMQQAARISDKTAVFLTGGELVEFDDTDKIFENPESQRVEDYITGKFG.

Residues 1-51 form a disordered region; the sequence is MTENEMTSNDSTEPTPTTETAASSPDPSGDPLIEQSIDVEGTDSTAAETGK. Positions 10-27 are enriched in low complexity; the sequence is DSTEPTPTTETAASSPDP. The ABC transporter domain occupies 54–294; sequence IESSDLNVFY…PESQRVEDYI (241 aa). An ATP-binding site is contributed by 86 to 93; sequence GPSGCGKS.

The protein belongs to the ABC transporter superfamily. Phosphate importer (TC 3.A.1.7) family. In terms of assembly, the complex is composed of two ATP-binding proteins (PstB), two transmembrane proteins (PstC and PstA) and a solute-binding protein (PstS).

Its subcellular location is the cell membrane. The enzyme catalyses phosphate(out) + ATP + H2O = ADP + 2 phosphate(in) + H(+). Part of the ABC transporter complex PstSACB involved in phosphate import. Responsible for energy coupling to the transport system. The protein is Phosphate import ATP-binding protein PstB 1 of Haloarcula marismortui (strain ATCC 43049 / DSM 3752 / JCM 8966 / VKM B-1809) (Halobacterium marismortui).